The following is a 569-amino-acid chain: Proline--tRNA ligase (569 aa).

This sequence belongs to the class-II aminoacyl-tRNA synthetase family. ProS type 1 subfamily. In terms of assembly, homodimer.

It localises to the cytoplasm. The enzyme catalyses tRNA(Pro) + L-proline + ATP = L-prolyl-tRNA(Pro) + AMP + diphosphate. In terms of biological role, catalyzes the attachment of proline to tRNA(Pro) in a two-step reaction: proline is first activated by ATP to form Pro-AMP and then transferred to the acceptor end of tRNA(Pro). As ProRS can inadvertently accommodate and process non-cognate amino acids such as alanine and cysteine, to avoid such errors it has two additional distinct editing activities against alanine. One activity is designated as 'pretransfer' editing and involves the tRNA(Pro)-independent hydrolysis of activated Ala-AMP. The other activity is designated 'posttransfer' editing and involves deacylation of mischarged Ala-tRNA(Pro). The misacylated Cys-tRNA(Pro) is not edited by ProRS. This chain is Proline--tRNA ligase, found in Halalkalibacterium halodurans (strain ATCC BAA-125 / DSM 18197 / FERM 7344 / JCM 9153 / C-125) (Bacillus halodurans).